Here is a 1091-residue protein sequence, read N- to C-terminus: ATP-dependent helicase/deoxyribonuclease subunit B (1091 aa).

Belongs to the helicase family. AddB/RexB type 2 subfamily. Heterodimer of AddA and RexB. Mg(2+) is required as a cofactor.

The heterodimer acts as both an ATP-dependent DNA helicase and an ATP-dependent, dual-direction single-stranded exonuclease. Recognizes the chi site generating a DNA molecule suitable for the initiation of homologous recombination. This subunit has 5' -&gt; 3' nuclease activity but not helicase activity. This is ATP-dependent helicase/deoxyribonuclease subunit B from Streptococcus pneumoniae serotype 19F (strain G54).